The following is a 309-amino-acid chain: Anamorsin (309 aa).

The interval 6–172 (ISPGQLVAVF…KPNFEVGSSS (167 aa)) is N-terminal SAM-like domain. A linker region spans residues 173 to 222 (QLKLPNKKSSSVKPVVDPAAAKLWTLSANDMEDDSVDLIDSDELLDPEDL). Phosphoserine occurs at positions 182, 183, and 213. Cys-235, Cys-244, Cys-247, and Cys-249 together coordinate [2Fe-2S] cluster. The fe-S binding site A stretch occupies residues 235-249 (CGEGKKRKACKNCTC). Ser-269 is subject to Phosphoserine. [4Fe-4S] cluster is bound by residues Cys-271, Cys-274, Cys-282, and Cys-285. 2 short sequence motifs (cx2C motif) span residues 271-274 (CGNC) and 282-285 (CANC). The fe-S binding site B stretch occupies residues 271–285 (CGNCYLGDAFRCANC). A phosphoserine mark is found at Ser-302 and Ser-304.

This sequence belongs to the anamorsin family. In terms of assembly, monomer. Interacts with NDOR1. Interacts with CHCHD4. The cofactor is [2Fe-2S] cluster. It depends on [4Fe-4S] cluster as a cofactor.

The protein localises to the cytoplasm. Its subcellular location is the nucleus. The protein resides in the mitochondrion intermembrane space. In terms of biological role, component of the cytosolic iron-sulfur (Fe-S) protein assembly (CIA) machinery required for the maturation of extramitochondrial Fe-S proteins. Part of an electron transfer chain functioning in an early step of cytosolic Fe-S biogenesis, facilitating the de novo assembly of a [4Fe-4S] cluster on the scaffold complex NUBP1-NUBP2. Electrons are transferred to CIAPIN1 from NADPH via the FAD- and FMN-containing protein NDOR1. NDOR1-CIAPIN1 are also required for the assembly of the diferric tyrosyl radical cofactor of ribonucleotide reductase (RNR), probably by providing electrons for reduction during radical cofactor maturation in the catalytic small subunit. Has anti-apoptotic effects in the cell. Involved in negative control of cell death upon cytokine withdrawal. Promotes development of hematopoietic cells. This is Anamorsin from Mus musculus (Mouse).